Reading from the N-terminus, the 189-residue chain is Large ribosomal subunit protein bL9 (189 aa).

This sequence belongs to the bacterial ribosomal protein bL9 family.

Its function is as follows. Binds to the 23S rRNA. In Brucella ovis (strain ATCC 25840 / 63/290 / NCTC 10512), this protein is Large ribosomal subunit protein bL9.